Here is a 112-residue protein sequence, read N- to C-terminus: Class I hydrophobin 7 (112 aa).

Residues 1–23 form the signal peptide; the sequence is MFARQATSVSAFLVLTLSLFAAA. 4 disulfide bridges follow: Cys36/Cys93, Cys43/Cys87, Cys44/Cys74, and Cys94/Cys107. N-linked (GlcNAc...) asparagine glycosylation is present at Asn96.

The protein belongs to the fungal hydrophobin family. In terms of assembly, self-assembles to form functional amyloid fibrils called rodlets. Self-assembly into fibrillar rodlets occurs spontaneously at hydrophobic:hydrophilic interfaces and the rodlets further associate laterally to form amphipathic monolayers.

Its subcellular location is the secreted. The protein resides in the cell wall. Its function is as follows. Aerial growth, conidiation, and dispersal of filamentous fungi in the environment rely upon a capability of their secreting small amphipathic proteins called hydrophobins (HPBs) with low sequence identity. Class I can self-assemble into an outermost layer of rodlet bundles on aerial cell surfaces, conferring cellular hydrophobicity that supports fungal growth, development and dispersal; whereas Class II form highly ordered films at water-air interfaces through intermolecular interactions but contribute nothing to the rodlet structure. The sequence is that of Class I hydrophobin 7 from Flammulina velutipes (Agaricus velutipes).